Here is a 79-residue protein sequence, read N- to C-terminus: Small ribosomal subunit protein bS16c (79 aa).

This sequence belongs to the bacterial ribosomal protein bS16 family.

It is found in the plastid. Its subcellular location is the chloroplast. The protein is Small ribosomal subunit protein bS16c of Trieres chinensis (Marine centric diatom).